The sequence spans 416 residues: LL-diaminopimelate aminotransferase (416 aa).

Residues Tyr25 and Gly52 each contribute to the substrate site. Pyridoxal 5'-phosphate-binding positions include Tyr78, 115 to 116 (SK), Tyr140, Asn190, Tyr221, and 248 to 250 (SFS). Substrate is bound by residues Lys116, Tyr140, and Asn190. Lys251 carries the post-translational modification N6-(pyridoxal phosphate)lysine. Arg259 contacts pyridoxal 5'-phosphate.

This sequence belongs to the class-I pyridoxal-phosphate-dependent aminotransferase family. Homodimer. Pyridoxal 5'-phosphate serves as cofactor.

The protein localises to the cytoplasm. The catalysed reaction is (2S,6S)-2,6-diaminopimelate + 2-oxoglutarate = (S)-2,3,4,5-tetrahydrodipicolinate + L-glutamate + H2O + H(+). The protein operates within amino-acid biosynthesis; L-lysine biosynthesis via DAP pathway; LL-2,6-diaminopimelate from (S)-tetrahydrodipicolinate (aminotransferase route): step 1/1. Involved in the synthesis of meso-diaminopimelate (m-DAP or DL-DAP), required for both lysine and peptidoglycan biosynthesis. Catalyzes the direct conversion of tetrahydrodipicolinate to LL-diaminopimelate. The polypeptide is LL-diaminopimelate aminotransferase (dapL) (Methanococcus maripaludis (strain DSM 14266 / JCM 13030 / NBRC 101832 / S2 / LL)).